Reading from the N-terminus, the 165-residue chain is Transcription factor E (165 aa).

The 83-residue stretch at 5-87 folds into the HTH TFE/IIEalpha-type domain; sequence NDPVVRGYLL…LWQLDLSDIE (83 aa).

It belongs to the TFE family. As to quaternary structure, monomer. Interaction with RNA polymerase subunits RpoF and RpoE is necessary for Tfe stimulatory transcription activity. Able to interact with Tbp and RNA polymerase in the absence of DNA promoter. Interacts both with the preinitiation and elongation complexes.

In terms of biological role, transcription factor that plays a role in the activation of archaeal genes transcribed by RNA polymerase. Facilitates transcription initiation by enhancing TATA-box recognition by TATA-box-binding protein (Tbp), and transcription factor B (Tfb) and RNA polymerase recruitment. Not absolutely required for transcription in vitro, but particularly important in cases where Tbp or Tfb function is not optimal. It dynamically alters the nucleic acid-binding properties of RNA polymerases by stabilizing the initiation complex and destabilizing elongation complexes. Seems to translocate with the RNA polymerase following initiation and acts by binding to the non template strand of the transcription bubble in elongation complexes. The sequence is that of Transcription factor E from Methanococcoides burtonii (strain DSM 6242 / NBRC 107633 / OCM 468 / ACE-M).